A 282-amino-acid polypeptide reads, in one-letter code: MEFPCTLTLKELLESGAHFGHQTSRWNPRMKPFIFEEKNGLYIIDLAKTLAQLKKAVACIQTTIGQEKSILFVGTKKQAKQIIREAAIECGEFFASERWLGGMLTNMATIRNSVKTLNRIELDLEASNSGLTKKELALLAKRHRKLLNNLEGVRHMNSLPGLLIVIDPGYERIAVAEAGKLGIPVMALVDTNCDPTPINHVIPCNDDSMKSIRLIVNVLKDAVIDAKKRLGIGILSPVRPAERPAEEAVEELPLPTGEAQDEASSKEGFLLWADIDNCEALK.

The segment at 245–265 (AEEAVEELPLPTGEAQDEASS) is disordered.

This sequence belongs to the universal ribosomal protein uS2 family.

The chain is Small ribosomal subunit protein uS2 from Chlamydia trachomatis serovar A (strain ATCC VR-571B / DSM 19440 / HAR-13).